The following is a 299-amino-acid chain: GTPase Era (299 aa).

The Era-type G domain maps to 4-171 (KSGFVAILGR…VDILSENLDE (168 aa)). The tract at residues 12-19 (GRPNVGKS) is G1. A GTP-binding site is contributed by 12 to 19 (GRPNVGKS). The G2 stretch occupies residues 38–42 (XTTRN). Residues 59 to 62 (DTPG) form a G3 region. GTP-binding positions include 59-63 (DTPGI) and 121-124 (NKID). Positions 121–124 (NKID) are G4. The interval 150 to 152 (ISA) is G5. The KH type-2 domain occupies 202–280 (TREEIPHSVA…FLETWVKVKK (79 aa)).

Belongs to the TRAFAC class TrmE-Era-EngA-EngB-Septin-like GTPase superfamily. Era GTPase family. In terms of assembly, monomer.

Its subcellular location is the cytoplasm. It localises to the cell membrane. An essential GTPase that binds both GDP and GTP, with rapid nucleotide exchange. Plays a role in 16S rRNA processing and 30S ribosomal subunit biogenesis and possibly also in cell cycle regulation and energy metabolism. This is GTPase Era from Streptococcus pneumoniae serotype 19F (strain G54).